Here is a 477-residue protein sequence, read N- to C-terminus: Probable cytosolic Fe-S cluster assembly factor GM20417 (477 aa).

[4Fe-4S] cluster-binding residues include Cys23, Cys68, Cys71, Cys74, Cys187, Cys243, Cys395, and Cys399.

It belongs to the NARF family.

Its function is as follows. Component of the cytosolic iron-sulfur (Fe/S) protein assembly machinery. Required for maturation of extramitochondrial Fe/S proteins. This Drosophila sechellia (Fruit fly) protein is Probable cytosolic Fe-S cluster assembly factor GM20417.